Consider the following 138-residue polypeptide: Nucleoside diphosphate kinase (138 aa).

Residues K9, F57, R85, T91, R102, and N112 each contribute to the ATP site. Residue H115 is the Pros-phosphohistidine intermediate of the active site.

The protein belongs to the NDK family. In terms of assembly, homotetramer. Requires Mg(2+) as cofactor.

It localises to the cytoplasm. The enzyme catalyses a 2'-deoxyribonucleoside 5'-diphosphate + ATP = a 2'-deoxyribonucleoside 5'-triphosphate + ADP. The catalysed reaction is a ribonucleoside 5'-diphosphate + ATP = a ribonucleoside 5'-triphosphate + ADP. Its function is as follows. Major role in the synthesis of nucleoside triphosphates other than ATP. The ATP gamma phosphate is transferred to the NDP beta phosphate via a ping-pong mechanism, using a phosphorylated active-site intermediate. This is Nucleoside diphosphate kinase from Exiguobacterium sibiricum (strain DSM 17290 / CCUG 55495 / CIP 109462 / JCM 13490 / 255-15).